Consider the following 503-residue polypeptide: Palmitoleoyl-protein carboxylesterase NOTUM (503 aa).

The N-terminal stretch at 1-19 (MGGEVRVLLLLGLLHWVGG) is a signal peptide. A disordered region spans residues 23–53 (RKTWRRRGQQPPQPPPPPPLPQRAEVEPGAG). Residues 33–43 (PPQPPPPPPLP) are compositionally biased toward pro residues. Ser-88 carries the phosphoserine modification. Asn-103 carries N-linked (GlcNAc...) asparagine glycosylation. Catalysis depends on charge relay system residues Ser-239, Asp-347, and His-396.

This sequence belongs to the pectinacetylesterase family. Notum subfamily. In terms of tissue distribution, widely expressed. Expressed in lung, ovary, kidney, liver and brain. Not detected in thymus, heart, spleen, stomach, skeletal muscle and bone marrow.

It is found in the secreted. The enzyme catalyses [Wnt protein]-O-(9Z)-hexadecenoyl-L-serine + H2O = [Wnt protein]-L-serine + (9Z)-hexadecenoate + H(+). Functionally, carboxylesterase that acts as a key negative regulator of the Wnt signaling pathway by specifically mediating depalmitoleoylation of WNT proteins. Serine palmitoleoylation of WNT proteins is required for efficient binding to frizzled receptors. The sequence is that of Palmitoleoyl-protein carboxylesterase NOTUM from Mus musculus (Mouse).